The primary structure comprises 176 residues: Centromere protein R (176 aa).

Lys8 participates in a covalent cross-link: Glycyl lysine isopeptide (Lys-Gly) (interchain with G-Cter in SUMO2). At Ser17 the chain carries Phosphoserine. Residues 20-50 form a DD1 region; that stretch reads PSKIMRKKSITAFSPTTGTYQLSPFSSPRTP. Residue Lys22 forms a Glycyl lysine isopeptide (Lys-Gly) (interchain with G-Cter in SUMO2) linkage. Ser28 bears the Phosphoserine mark. The span at 34–48 shows a compositional bias: polar residues; sequence PTTGTYQLSPFSSPR. The segment at 34 to 80 is disordered; sequence PTTGTYQLSPFSSPRTPKEQEHRDGPSNGTRKWSVLSSPARQDSTVK. The segment covering 49–58 has biased composition (basic and acidic residues); that stretch reads TPKEQEHRDG. A compositionally biased stretch (polar residues) spans 60-80; the sequence is SNGTRKWSVLSSPARQDSTVK. A Nuclear localization signal motif is present at residues 63–66; sequence TRKW. Phosphoserine is present on Ser71. Positions 82–112 form a coiled coil; that stretch reads SDGFMMLLSKIERSSEKTMEIMKNLSSLQAL. The LXXLL motif motif lies at 118-122; the sequence is LEDLL. Residues 171-175 carry the LXXIL motif motif; it reads LKAIL.

Homodimer; mediated by the coiled coil domain. Interacts with CCNA2 and MTA1. Interacts with NFKB1 NF-kappa-B subunit. Component of the CENPA-CAD complex, composed of CENPI, CENPK, CENPL, CENPO, CENPP, CENPQ, CENPR and CENPS. The CENPA-CAD complex interacts with the CENPA-NAC complex, at least composed of CENPA, CENPC, CENPH, CENPM, CENPN, CENPT and CENPU. Interacts with TASOR.

It localises to the nucleus. The protein localises to the chromosome. The protein resides in the centromere. It is found in the kinetochore. Transcription coregulator that can have both coactivator and corepressor functions. Involved in the coactivation of nuclear receptors for retinoid X (RXRs) and thyroid hormone (TRs) in a ligand-dependent fashion. In contrast, it does not coactivate nuclear receptors for retinoic acid, vitamin D, progesterone receptor, nor glucocorticoid. Acts as a coactivator for estrogen receptor alpha. Acts as a transcriptional corepressor via its interaction with the NFKB1 NF-kappa-B subunit, possibly by interfering with the transactivation domain of NFKB1. Induces apoptosis in breast cancer cells, but not in other cancer cells, via a caspase-2 mediated pathway that involves mitochondrial membrane permeabilization but does not require other caspases. May also act as an inhibitor of cyclin A-associated kinase. Also acts a component of the CENPA-CAD (nucleosome distal) complex, a complex recruited to centromeres which is involved in assembly of kinetochore proteins, mitotic progression and chromosome segregation. May be involved in incorporation of newly synthesized CENPA into centromeres via its interaction with the CENPA-NAC complex. The protein is Centromere protein R (Itgb3bp) of Rattus norvegicus (Rat).